Reading from the N-terminus, the 379-residue chain is Cytochrome b (379 aa).

4 helical membrane passes run 33-53 (FGSLLGMCLMIQILTGLFLAM), 77-98 (WLIRYLHANGASMFFICLFIHV), 113-133 (WNIGIILFLMTMATAFVGYVL), and 178-198 (FFAFHFILPFIIAAFALVHLL). Heme b contacts are provided by His-83 and His-97. His-182 and His-196 together coordinate heme b. His-201 contacts a ubiquinone. 4 consecutive transmembrane segments (helical) span residues 226 to 246 (TKDLLGIFLLLLVLMILALFF), 288 to 308 (LGGVLALVLSILILAAFPLLN), 320 to 340 (VTQVIYWIFIANLLVLTWIGG), and 347 to 367 (FTMIGQIASITYFAIITILMP).

It belongs to the cytochrome b family. The cytochrome bc1 complex contains 11 subunits: 3 respiratory subunits (MT-CYB, CYC1 and UQCRFS1), 2 core proteins (UQCRC1 and UQCRC2) and 6 low-molecular weight proteins (UQCRH/QCR6, UQCRB/QCR7, UQCRQ/QCR8, UQCR10/QCR9, UQCR11/QCR10 and a cleavage product of UQCRFS1). This cytochrome bc1 complex then forms a dimer. It depends on heme b as a cofactor.

It is found in the mitochondrion inner membrane. Its function is as follows. Component of the ubiquinol-cytochrome c reductase complex (complex III or cytochrome b-c1 complex) that is part of the mitochondrial respiratory chain. The b-c1 complex mediates electron transfer from ubiquinol to cytochrome c. Contributes to the generation of a proton gradient across the mitochondrial membrane that is then used for ATP synthesis. This is Cytochrome b (MT-CYB) from Akodon fumeus (Smoky grass mouse).